Consider the following 77-residue polypeptide: MRTSGRLLLLCLAVGLLLESQAHPNADAGDATRDVGSDRTSVELSKMLKGWQAEKGQRKASAPKKFYVYPPVRRSFY.

A signal peptide spans 1 to 22 (MRTSGRLLLLCLAVGLLLESQA). Propeptides lie at residues 23–58 (HPNADAGDATRDVGSDRTSVELSKMLKGWQAEKGQR) and 73–77 (RRSFY).

The protein belongs to the conotoxin H superfamily. In terms of tissue distribution, expressed by the venom duct.

It localises to the secreted. In terms of biological role, probable toxin. In Conus victoriae (Queen Victoria cone), this protein is Conotoxin Vc1.